The sequence spans 475 residues: MAAGALRGLPVAGGGESSESEDDGWEIGYLDRTSQKLKGLLPIEEKKEKFKKAMTIGDVSLVQELLDSGISVDSTFQYGWTPLMYAASVANAELVRVLLDRGANASFEKDKQTILITACSAHGSEEQILKCVELLLSRNADPNVACRRLMTPIMYAARDGHTQVVALLVAHGAEVNTQDENGYTALTWAARQGHKNIVLKLLELGANKMLQTKDGKMPSEIAKRNKHHEIFNLLSFTLNPLEGKLQQLTKEDTICKILTTDSDREKDHIFSSYTAFGDLEVFLHGIGLEHMTDLLKERDITLRHLLTMREDEFTKNGITSKDQQKILAALKELQVEEIQFGELSEEIKLEISGDEFLNFLLKLNKQCGHLITAVQNIITELPVNSQKITLEWASPRNFTSVCEELVNNVEDLSEEVCKLKDLIQKLQNERENDPTHIQLREEVSTWNSRILKRTAITVCGFGFLLFICKLTFQRK.

Residues 1-25 (MAAGALRGLPVAGGGESSESEDDGW) form a disordered region. A phosphoserine mark is found at S17, S18, and S20. ANK repeat units follow at residues 45 to 74 (EKKEKFKKAMTIGDVSLVQELLDSGISVDS), 78 to 107 (YGWTPLMYAASVANAELVRVLLDRGANASF), 110 to 144 (DKQTILITACSAHGSEEQILKCVELLLSRNADPNV), 148 to 177 (RLMTPIMYAARDGHTQVVALLVAHGAEVNT), 181 to 210 (NGYTALTWAARQGHKNIVLKLLELGANKML), and 214 to 243 (DGKMPSEIAKRNKHHEIFNLLSFTLNPLEG). The region spanning 272–334 (SYTAFGDLEV…KILAALKELQ (63 aa)) is the SAM domain.

In terms of assembly, interacts with DDX4, PIWIL1, RANBP9 and TDRD1.

It is found in the cytoplasm. Its function is as follows. Plays a central role during spermatogenesis by repressing transposable elements and preventing their mobilization, which is essential for the germline integrity. Acts via the piRNA metabolic process, which mediates the repression of transposable elements during meiosis by forming complexes composed of piRNAs and Piwi proteins and governs the methylation and subsequent repression of transposons. Its association with pi-bodies suggests a participation in the primary piRNAs metabolic process. Required prior to the pachytene stage to facilitate the production of multiple types of piRNAs, including those associated with repeats involved in the regulation of retrotransposons. May act by mediating protein-protein interactions during germ cell maturation. The chain is Ankyrin repeat, SAM and basic leucine zipper domain-containing protein 1 (ASZ1) from Chlorocebus aethiops (Green monkey).